Consider the following 551-residue polypeptide: Podocalyxin (551 aa).

An N-terminal signal peptide occupies residues 1–21 (MRSALALAALLLLLLSPPSLS). The interval 18 to 324 (PSLSQEKSPQ…QRVSCGPPER (307 aa)) is disordered. Residues 22–452 (QEKSPQPGPT…PPEETEDRFS (431 aa)) are Extracellular-facing. The span at 32 to 59 (PMATSTSTRPAPASAPAPKSSVAASVPA) shows a compositional bias: low complexity. The span at 60–90 (EQNTTPMTTKAPATQSPSASPGSSVENSAPA) shows a compositional bias: polar residues. Positions 91–104 (QGSTTTQQSLSVTT) are enriched in low complexity. Residues 142–164 (APSNHSITTKPLATEATSQAPRQ) show a composition bias toward polar residues. N-linked (GlcNAc...) asparagine glycans are attached at residues Asn145 and Asn180. The segment covering 234 to 244 (PVASSAETQGM) has biased composition (polar residues). The segment covering 289–300 (TSSSTELASTAL) has biased composition (low complexity). A glycan (N-linked (GlcNAc...) asparagine) is linked at Asn333. Residues 453 to 473 (LPLIITIVCMASFLLLVAALY) form a helical membrane-spanning segment. At 474 to 551 (GCCHQRLSHR…DLDEEEDTHL (78 aa)) the chain is on the cytoplasmic side. Thr511 is modified (phosphothreonine). Phosphoserine is present on Ser530. At Thr549 the chain carries Phosphothreonine.

The protein belongs to the podocalyxin family. Monomer; when associated with the membrane raft. Oligomer; when integrated in the apical membrane. Found in a complex with EZR, PODXL and NHERF2. Associates with the actin cytoskeleton through complex formation with EZR and NHERF2. Interacts (via the C-terminal PDZ-binding motif DTHL) with NHERF1 (via the PDZ domains); interaction is not detected in glomerular epithelium cells, take place early in the secretory pathway and is necessary for its apical membrane sorting. Interacts (via the C-terminal PDZ-binding motif DTHL) with NHERF2 (via the PDZ 1 domain); interaction is detected in glomerular epithelium cells. Interacts with EZR. N- and O-linked glycosylated. Sialoglycoprotein. In terms of tissue distribution, glomerular epithelium cell (podocyte) and endothelial cells.

The protein localises to the apical cell membrane. Its subcellular location is the cell projection. It is found in the microvillus. It localises to the membrane raft. The protein resides in the lamellipodium. The protein localises to the filopodium. Its subcellular location is the ruffle. It is found in the membrane. Involved in the regulation of both adhesion and cell morphology and cancer progression. Functions as an anti-adhesive molecule that maintains an open filtration pathway between neighboring foot processes in the podocyte by charge repulsion. Acts as a pro-adhesive molecule, enhancing the adherence of cells to immobilized ligands, increasing the rate of migration and cell-cell contacts in an integrin-dependent manner. Induces the formation of apical actin-dependent microvilli. Involved in the formation of a preapical plasma membrane subdomain to set up initial epithelial polarization and the apical lumen formation during renal tubulogenesis. Plays a role in cancer development and aggressiveness by inducing cell migration and invasion through its interaction with the actin-binding protein EZR. Affects EZR-dependent signaling events, leading to increased activities of the MAPK and PI3K pathways in cancer cells. The polypeptide is Podocalyxin (PODXL) (Oryctolagus cuniculus (Rabbit)).